The following is a 188-amino-acid chain: Peptide deformylase (188 aa).

Residues C109 and H152 each coordinate Fe cation. The active site involves E153. H156 is a Fe cation binding site.

Belongs to the polypeptide deformylase family. Requires Fe(2+) as cofactor.

The catalysed reaction is N-terminal N-formyl-L-methionyl-[peptide] + H2O = N-terminal L-methionyl-[peptide] + formate. Functionally, removes the formyl group from the N-terminal Met of newly synthesized proteins. Requires at least a dipeptide for an efficient rate of reaction. N-terminal L-methionine is a prerequisite for activity but the enzyme has broad specificity at other positions. This is Peptide deformylase from Chloroflexus aurantiacus (strain ATCC 29366 / DSM 635 / J-10-fl).